Consider the following 352-residue polypeptide: MINRVKTKQIFVGNVAVGGDSPISVQSMTFSKTSDVFSTVEQIKRLHFAGCDIVRVAVPEMEDALALRAIKEQISLPLVADIHFNYRLALIAAEVVDCIRINPGNIGSRERVKEVVKACQERNIPIRIGVNAGSLEKEFLNKYGQTSEGMVASAEYNIKFLEDLGFDDIKISLKASDVQRTVDAYRMLRPKNNYPFHLGVTEAGTLFHATVKSSIGLGALLLDGIGDTMRVSITGELEEEINVARAILKDSGAAKDGLNIISCPTCGRIEADLVSAVGEIERRTTHIKAPLNVSVMGCVVNAIGEAAHADIAIAYGKGKGLVMVKGEVVANLDEHELVDRFVQEVEKMAKEF.

The [4Fe-4S] cluster site is built by C263, C266, C298, and E305.

The protein belongs to the IspG family. The cofactor is [4Fe-4S] cluster.

The catalysed reaction is (2E)-4-hydroxy-3-methylbut-2-enyl diphosphate + oxidized [flavodoxin] + H2O + 2 H(+) = 2-C-methyl-D-erythritol 2,4-cyclic diphosphate + reduced [flavodoxin]. It participates in isoprenoid biosynthesis; isopentenyl diphosphate biosynthesis via DXP pathway; isopentenyl diphosphate from 1-deoxy-D-xylulose 5-phosphate: step 5/6. In terms of biological role, converts 2C-methyl-D-erythritol 2,4-cyclodiphosphate (ME-2,4cPP) into 1-hydroxy-2-methyl-2-(E)-butenyl 4-diphosphate. In Sulfurimonas denitrificans (strain ATCC 33889 / DSM 1251) (Thiomicrospira denitrificans (strain ATCC 33889 / DSM 1251)), this protein is 4-hydroxy-3-methylbut-2-en-1-yl diphosphate synthase (flavodoxin).